A 142-amino-acid polypeptide reads, in one-letter code: ATP synthase epsilon chain (142 aa).

The protein belongs to the ATPase epsilon chain family. As to quaternary structure, F-type ATPases have 2 components, CF(1) - the catalytic core - and CF(0) - the membrane proton channel. CF(1) has five subunits: alpha(3), beta(3), gamma(1), delta(1), epsilon(1). CF(0) has three main subunits: a, b and c.

The protein localises to the cell inner membrane. Its function is as follows. Produces ATP from ADP in the presence of a proton gradient across the membrane. The protein is ATP synthase epsilon chain of Shewanella baltica (strain OS155 / ATCC BAA-1091).